Here is a 455-residue protein sequence, read N- to C-terminus: Tubulin alpha-1 chain (455 aa).

Residues Gln11, Glu75, Ser144, Gly148, Thr149, Thr183, Asn210, and Asn232 each contribute to the GTP site. Glu75 contacts Mg(2+). Residue Glu258 is part of the active site.

The protein belongs to the tubulin family. As to quaternary structure, dimer of alpha and beta chains. A typical microtubule is a hollow water-filled tube with an outer diameter of 25 nm and an inner diameter of 15 nM. Alpha-beta heterodimers associate head-to-tail to form protofilaments running lengthwise along the microtubule wall with the beta-tubulin subunit facing the microtubule plus end conferring a structural polarity. Microtubules usually have 13 protofilaments but different protofilament numbers can be found in some organisms and specialized cells. The cofactor is Mg(2+).

The protein resides in the cytoplasm. Its subcellular location is the cytoskeleton. The catalysed reaction is GTP + H2O = GDP + phosphate + H(+). Functionally, tubulin is the major constituent of microtubules, a cylinder consisting of laterally associated linear protofilaments composed of alpha- and beta-tubulin heterodimers. Microtubules grow by the addition of GTP-tubulin dimers to the microtubule end, where a stabilizing cap forms. Below the cap, tubulin dimers are in GDP-bound state, owing to GTPase activity of alpha-tubulin. This is Tubulin alpha-1 chain (nda2) from Schizosaccharomyces pombe (strain 972 / ATCC 24843) (Fission yeast).